Consider the following 515-residue polypeptide: Bifunctional purine biosynthesis protein PurH (515 aa).

Positions 1 to 145 constitute an MGS-like domain; the sequence is MTKRVLISVS…KNHASVTVVV (145 aa).

This sequence belongs to the PurH family.

The enzyme catalyses (6R)-10-formyltetrahydrofolate + 5-amino-1-(5-phospho-beta-D-ribosyl)imidazole-4-carboxamide = 5-formamido-1-(5-phospho-D-ribosyl)imidazole-4-carboxamide + (6S)-5,6,7,8-tetrahydrofolate. It catalyses the reaction IMP + H2O = 5-formamido-1-(5-phospho-D-ribosyl)imidazole-4-carboxamide. Its pathway is purine metabolism; IMP biosynthesis via de novo pathway; 5-formamido-1-(5-phospho-D-ribosyl)imidazole-4-carboxamide from 5-amino-1-(5-phospho-D-ribosyl)imidazole-4-carboxamide (10-formyl THF route): step 1/1. It functions in the pathway purine metabolism; IMP biosynthesis via de novo pathway; IMP from 5-formamido-1-(5-phospho-D-ribosyl)imidazole-4-carboxamide: step 1/1. The polypeptide is Bifunctional purine biosynthesis protein PurH (Streptococcus pneumoniae (strain Taiwan19F-14)).